Reading from the N-terminus, the 160-residue chain is Cytochrome b6-f complex subunit 4 (160 aa).

Transmembrane regions (helical) follow at residues 36–56 (LLYIFPVVILGTIACVVGLAV), 95–115 (LLGIALQTLIPLGLMILPFIE), and 131–151 (VVFLFGTFLTIYLGIGACLPI).

Belongs to the cytochrome b family. PetD subfamily. In terms of assembly, the 4 large subunits of the cytochrome b6-f complex are cytochrome b6, subunit IV (17 kDa polypeptide, PetD), cytochrome f and the Rieske protein, while the 4 small subunits are PetG, PetL, PetM and PetN. The complex functions as a dimer.

It is found in the cellular thylakoid membrane. Its function is as follows. Component of the cytochrome b6-f complex, which mediates electron transfer between photosystem II (PSII) and photosystem I (PSI), cyclic electron flow around PSI, and state transitions. This Prochlorococcus marinus (strain MIT 9515) protein is Cytochrome b6-f complex subunit 4.